A 575-amino-acid chain; its full sequence is Methionine--tRNA ligase, mitochondrial (575 aa).

The short motif at 20–32 (PIFYPNAKPHLGH) is the 'HIGH' region element. The short motif at 341-345 (KMSKS) is the 'KMSKS' region element. Lys-344 contacts ATP.

The protein belongs to the class-I aminoacyl-tRNA synthetase family.

Its subcellular location is the mitochondrion matrix. It carries out the reaction tRNA(Met) + L-methionine + ATP = L-methionyl-tRNA(Met) + AMP + diphosphate. Its function is as follows. Catalyzes the attachment of methionine to tRNA(Met) in the mitochondrion. The protein is Methionine--tRNA ligase, mitochondrial (MSM1) of Saccharomyces cerevisiae (strain ATCC 204508 / S288c) (Baker's yeast).